The following is a 315-amino-acid chain: Acetaldehyde dehydrogenase (315 aa).

13 to 16 (SGNI) provides a ligand contact to NAD(+). The active-site Acyl-thioester intermediate is the cysteine 131. NAD(+) is bound by residues 163–171 (SAGPGTRAN) and asparagine 290.

It belongs to the acetaldehyde dehydrogenase family.

The catalysed reaction is acetaldehyde + NAD(+) + CoA = acetyl-CoA + NADH + H(+). This chain is Acetaldehyde dehydrogenase, found in Xanthobacter autotrophicus (strain ATCC BAA-1158 / Py2).